The primary structure comprises 354 residues: Probable glucan endo-1,3-beta-glucosidase BG5 (354 aa).

Residues 1-30 (MLYLPKKLFLFFFSCIVVIVNYNNSDFVNA) form the signal peptide. Glutamate 137 serves as the catalytic Proton donor. Glutamate 276 (nucleophile) is an active-site residue. An N-linked (GlcNAc...) asparagine glycan is attached at asparagine 286.

The protein belongs to the glycosyl hydrolase 17 family.

It is found in the secreted. It carries out the reaction Hydrolysis of (1-&gt;3)-beta-D-glucosidic linkages in (1-&gt;3)-beta-D-glucans.. In terms of biological role, may play a role in plant defense against pathogens. The protein is Probable glucan endo-1,3-beta-glucosidase BG5 of Arabidopsis thaliana (Mouse-ear cress).